We begin with the raw amino-acid sequence, 192 residues long: Xanthine phosphoribosyltransferase (192 aa).

Xanthine contacts are provided by Leu20 and Asn27. 128-132 provides a ligand contact to 5-phospho-alpha-D-ribose 1-diphosphate; sequence ANGQA. Lys156 serves as a coordination point for xanthine.

Belongs to the purine/pyrimidine phosphoribosyltransferase family. Xpt subfamily. As to quaternary structure, homodimer.

The protein resides in the cytoplasm. It catalyses the reaction XMP + diphosphate = xanthine + 5-phospho-alpha-D-ribose 1-diphosphate. Its pathway is purine metabolism; XMP biosynthesis via salvage pathway; XMP from xanthine: step 1/1. Its function is as follows. Converts the preformed base xanthine, a product of nucleic acid breakdown, to xanthosine 5'-monophosphate (XMP), so it can be reused for RNA or DNA synthesis. The chain is Xanthine phosphoribosyltransferase from Ligilactobacillus salivarius (strain UCC118) (Lactobacillus salivarius).